Consider the following 336-residue polypeptide: Large ribosomal subunit protein uL3 (336 aa).

Residues M1–D34 form a disordered region.

It belongs to the universal ribosomal protein uL3 family. As to quaternary structure, part of the 50S ribosomal subunit. Forms a cluster with proteins L14 and L24e.

One of the primary rRNA binding proteins, it binds directly near the 3'-end of the 23S rRNA, where it nucleates assembly of the 50S subunit. In Methanobrevibacter smithii (strain ATCC 35061 / DSM 861 / OCM 144 / PS), this protein is Large ribosomal subunit protein uL3.